The following is a 206-amino-acid chain: Ribonuclease HII (206 aa).

The RNase H type-2 domain occupies 22–206 (RFICGVDEAG…ISFLKNILSL (185 aa)). Positions 28, 29, and 120 each coordinate a divalent metal cation.

It belongs to the RNase HII family. Mn(2+) serves as cofactor. It depends on Mg(2+) as a cofactor.

It is found in the cytoplasm. The catalysed reaction is Endonucleolytic cleavage to 5'-phosphomonoester.. Functionally, endonuclease that specifically degrades the RNA of RNA-DNA hybrids. This chain is Ribonuclease HII, found in Caldicellulosiruptor bescii (strain ATCC BAA-1888 / DSM 6725 / KCTC 15123 / Z-1320) (Anaerocellum thermophilum).